A 375-amino-acid polypeptide reads, in one-letter code: Amylovoran biosynthesis protein AmsC (375 aa).

9 helical membrane passes run 2-22, 31-51, 93-113, 162-182, 208-228, 256-276, 287-307, 309-329, and 337-357; these read AIYW…LAMI, KILI…FAGI, MVLA…LLFI, IAFI…FIVL, LPLV…KKLF, VFGL…LYYF, VYIL…FSDF, IFGG…FAFL, and LLNF…NTIL.

The protein localises to the cell membrane. The protein operates within glycan metabolism; exopolysaccharide biosynthesis. Involved in the biosynthesis of amylovoran which functions as a virulence factor. The polypeptide is Amylovoran biosynthesis protein AmsC (amsC) (Erwinia amylovora (Fire blight bacteria)).